The sequence spans 72 residues: Large ribosomal subunit protein bL31 (72 aa).

It belongs to the bacterial ribosomal protein bL31 family. Type A subfamily. As to quaternary structure, part of the 50S ribosomal subunit.

Its function is as follows. Binds the 23S rRNA. The polypeptide is Large ribosomal subunit protein bL31 (Deinococcus deserti (strain DSM 17065 / CIP 109153 / LMG 22923 / VCD115)).